The chain runs to 638 residues: Phosphomethylpyrimidine synthase (638 aa).

Substrate is bound by residues Asn243, Met272, Tyr301, His337, 357–359, 398–401, and Glu437; these read SRG and DGLR. Residue His441 coordinates Zn(2+). Residue Tyr464 participates in substrate binding. His505 is a Zn(2+) binding site. Positions 585, 588, and 593 each coordinate [4Fe-4S] cluster.

This sequence belongs to the ThiC family. Homodimer. It depends on [4Fe-4S] cluster as a cofactor.

The catalysed reaction is 5-amino-1-(5-phospho-beta-D-ribosyl)imidazole + S-adenosyl-L-methionine = 4-amino-2-methyl-5-(phosphooxymethyl)pyrimidine + CO + 5'-deoxyadenosine + formate + L-methionine + 3 H(+). The protein operates within cofactor biosynthesis; thiamine diphosphate biosynthesis. In terms of biological role, catalyzes the synthesis of the hydroxymethylpyrimidine phosphate (HMP-P) moiety of thiamine from aminoimidazole ribotide (AIR) in a radical S-adenosyl-L-methionine (SAM)-dependent reaction. This is Phosphomethylpyrimidine synthase from Aromatoleum aromaticum (strain DSM 19018 / LMG 30748 / EbN1) (Azoarcus sp. (strain EbN1)).